The following is a 71-amino-acid chain: Beta-defensin 2 (71 aa).

The N-terminal stretch at 1–20 (MRTLCSLLLICCLLFSYTTP) is a signal peptide. Disulfide bonds link C37–C66, C44–C59, and C49–C67.

This sequence belongs to the beta-defensin family. In terms of tissue distribution, kidney, uterus and to a lesser extent in heart.

It is found in the secreted. Functionally, has bactericidal activity. The sequence is that of Beta-defensin 2 (Defb2) from Mus musculus (Mouse).